We begin with the raw amino-acid sequence, 462 residues long: ATP synthase subunit beta (462 aa).

An ATP-binding site is contributed by 151–158 (GGAGVGKT).

This sequence belongs to the ATPase alpha/beta chains family. As to quaternary structure, F-type ATPases have 2 components, CF(1) - the catalytic core - and CF(0) - the membrane proton channel. CF(1) has five subunits: alpha(3), beta(3), gamma(1), delta(1), epsilon(1). CF(0) has four main subunits: a(1), b(1), b'(1) and c(9-12).

It is found in the cell inner membrane. It carries out the reaction ATP + H2O + 4 H(+)(in) = ADP + phosphate + 5 H(+)(out). Produces ATP from ADP in the presence of a proton gradient across the membrane. The catalytic sites are hosted primarily by the beta subunits. In Chlorobium limicola (strain DSM 245 / NBRC 103803 / 6330), this protein is ATP synthase subunit beta.